Reading from the N-terminus, the 245-residue chain is MLERGAESAAGATDPSPTGKEPVTKEAPHQGPPQKPSQSAPGPTASAGSPPRPRRRPPPQRPHRCPDCDKAFSYPSKLATHRLAHGGARPHPCPDCPKAFSYPSKLAAHRLTHSGARPHPCPHCPKSFGHRSKLAAHLWTHAPTRPYPCPDCPKSFCYPSKLAAHRHTHHATDARPYPCPHCPKAFSFPSKLAAHRLCHDPPTAPGSQATAWHRCSSCGQAFGQRRLLLLHQRSHHQVEHKGERD.

The segment at 1 to 67 (MLERGAESAA…PPQRPHRCPD (67 aa)) is disordered. Residues 36–49 (PSQSAPGPTASAGS) are compositionally biased toward low complexity. Positions 52–63 (RPRRRPPPQRPH) are enriched in basic residues. 6 C2H2-type zinc fingers span residues 63–85 (HRCP…RLAH), 91–113 (HPCP…RLTH), 119–141 (HPCP…LWTH), 147–169 (YPCP…RHTH), 177–199 (YPCP…RLCH), and 213–240 (HRCS…QVEH).

This sequence belongs to the krueppel C2H2-type zinc-finger protein family.

The protein resides in the nucleus. Its function is as follows. May be involved in transcriptional regulation. This is Zinc finger protein 575 (ZNF575) from Homo sapiens (Human).